We begin with the raw amino-acid sequence, 575 residues long: Acetolactate synthase large subunit (575 aa).

Residue Glu57 participates in thiamine diphosphate binding. Residues Arg159, 265–286 (HGSY…LGSR), and 308–327 (DIDA…ILSD) each bind FAD. The thiamine pyrophosphate binding stretch occupies residues 395-475 (QHQMWVAQYY…IKVVLINNHS (81 aa)). Residues Asp446 and Asn473 each contribute to the Mg(2+) site.

It belongs to the TPP enzyme family. Dimer of large and small chains. It depends on Mg(2+) as a cofactor. Thiamine diphosphate is required as a cofactor.

The catalysed reaction is 2 pyruvate + H(+) = (2S)-2-acetolactate + CO2. It participates in amino-acid biosynthesis; L-isoleucine biosynthesis; L-isoleucine from 2-oxobutanoate: step 1/4. The protein operates within amino-acid biosynthesis; L-valine biosynthesis; L-valine from pyruvate: step 1/4. In Lactococcus lactis subsp. lactis (strain IL1403) (Streptococcus lactis), this protein is Acetolactate synthase large subunit (ilvB).